Here is a 574-residue protein sequence, read N- to C-terminus: DNA mismatch repair protein MutL (574 aa).

The protein belongs to the DNA mismatch repair MutL/HexB family.

This protein is involved in the repair of mismatches in DNA. It is required for dam-dependent methyl-directed DNA mismatch repair. May act as a 'molecular matchmaker', a protein that promotes the formation of a stable complex between two or more DNA-binding proteins in an ATP-dependent manner without itself being part of a final effector complex. The protein is DNA mismatch repair protein MutL of Coxiella burnetii (strain RSA 331 / Henzerling II).